We begin with the raw amino-acid sequence, 75 residues long: Small ribosomal subunit protein bS18 (75 aa).

The protein belongs to the bacterial ribosomal protein bS18 family. Part of the 30S ribosomal subunit. Forms a tight heterodimer with protein bS6.

Functionally, binds as a heterodimer with protein bS6 to the central domain of the 16S rRNA, where it helps stabilize the platform of the 30S subunit. The chain is Small ribosomal subunit protein bS18 from Saccharophagus degradans (strain 2-40 / ATCC 43961 / DSM 17024).